The sequence spans 272 residues: MDRQIPTPENPWLALRNLTPARIALGRSGISLPTSAQLDFQFAHAQARDAVHLAFDHTALSEQLKERGRDSLVLHSAASDRNQYLQRPDLGRRLNERSVEQLRQHAKTNPGGCDLAIVVADGLSALAVHRHTLPFLARFEEQAAADGWTSAPVVLVEQGRVAVADEVGQLLGARMTVMLIGERPGLSSPDSLGLYFTYAPKVGLTDAYRNCISNVRLEGLSYGMAAHRLLYLMREACRRQLSGVNLKDEAEVHTIDSENTSNQKGNFLLGEG.

The adenosylcob(III)alamin site is built by valine 161, glutamate 182, and cysteine 211.

This sequence belongs to the EutC family. As to quaternary structure, the basic unit is a heterodimer which dimerizes to form tetramers. The heterotetramers trimerize; 6 large subunits form a core ring with 6 small subunits projecting outwards. The cofactor is adenosylcob(III)alamin.

It localises to the bacterial microcompartment. It catalyses the reaction ethanolamine = acetaldehyde + NH4(+). It functions in the pathway amine and polyamine degradation; ethanolamine degradation. In terms of biological role, catalyzes the deamination of various vicinal amino-alcohols to oxo compounds. Allows this organism to utilize ethanolamine as the sole source of nitrogen and carbon in the presence of external vitamin B12. This Pseudomonas putida (strain W619) protein is Ethanolamine ammonia-lyase small subunit.